A 339-amino-acid polypeptide reads, in one-letter code: NADH-quinone oxidoreductase subunit H (339 aa).

Helical transmembrane passes span 9 to 29 (IFPL…LILC), 50 to 70 (PNVV…KLLF), 82 to 102 (ILFI…WAVI), 115 to 135 (VGVL…IIAG), 161 to 181 (MGLV…SGII), 187 to 207 (MPWW…ISVL), 235 to 255 (MGFA…SAMT), 275 to 295 (IPGF…FLWI), and 311 to 331 (GWKV…SVLV).

It belongs to the complex I subunit 1 family. In terms of assembly, NDH-1 is composed of 14 different subunits. Subunits NuoA, H, J, K, L, M, N constitute the membrane sector of the complex.

It is found in the cell inner membrane. The enzyme catalyses a quinone + NADH + 5 H(+)(in) = a quinol + NAD(+) + 4 H(+)(out). NDH-1 shuttles electrons from NADH, via FMN and iron-sulfur (Fe-S) centers, to quinones in the respiratory chain. The immediate electron acceptor for the enzyme in this species is believed to be ubiquinone. Couples the redox reaction to proton translocation (for every two electrons transferred, four hydrogen ions are translocated across the cytoplasmic membrane), and thus conserves the redox energy in a proton gradient. This subunit may bind ubiquinone. The protein is NADH-quinone oxidoreductase subunit H of Rickettsia felis (strain ATCC VR-1525 / URRWXCal2) (Rickettsia azadi).